Reading from the N-terminus, the 395-residue chain is Phosphoglycerate kinase (395 aa).

Substrate-binding positions include 22 to 24, arginine 38, 61 to 64, arginine 119, and arginine 152; these read DFN and HLGR. Residues lysine 203, glycine 294, glutamate 325, and 351–354 each bind ATP; that span reads GGDT.

It belongs to the phosphoglycerate kinase family. Monomer.

It is found in the cytoplasm. It carries out the reaction (2R)-3-phosphoglycerate + ATP = (2R)-3-phospho-glyceroyl phosphate + ADP. It functions in the pathway carbohydrate degradation; glycolysis; pyruvate from D-glyceraldehyde 3-phosphate: step 2/5. In Hydrogenobaculum sp. (strain Y04AAS1), this protein is Phosphoglycerate kinase.